The following is a 129-amino-acid chain: Large ribosomal subunit protein eL32 (129 aa).

It belongs to the eukaryotic ribosomal protein eL32 family.

This Archaeoglobus fulgidus (strain ATCC 49558 / DSM 4304 / JCM 9628 / NBRC 100126 / VC-16) protein is Large ribosomal subunit protein eL32 (rpl32e).